The primary structure comprises 1067 residues: Myocardin-related transcription factor B (1067 aa).

3 RPEL repeats span residues 46–71, 90–115, and 134–159; these read EVLQ…PPLK, NFLK…EETL, and DDLN…PVDL. Disordered regions lie at residues 175–223 and 249–286; these read NLDT…NTTI and PLSC…PRVK. 2 stretches are compositionally biased toward polar residues: residues 193–203 and 212–223; these read QPASQESQGSA and SDSSSPVSNTTI. The span at 268-283 shows a compositional bias: basic and acidic residues; sequence KHTEKPRSKKSKDPKP. The 35-residue stretch at 390–424 folds into the SAP domain; it reads LDDMKVAELKMELKLRGLPVSGTKMDLIERLKPFQ. Positions 540 to 594 form a coiled coil; it reads GNTPNVELDAVEKDRKLQEKEKQIEELKRKLEQEQKLVEVLKKQLELEKRGQQQQ. Over residues 799 to 819 the composition is skewed to polar residues; it reads ISTSAQPQRSTQLTAVQNGPT. The segment at 799 to 829 is disordered; it reads ISTSAQPQRSTQLTAVQNGPTSLHEKSSTPP.

As to quaternary structure, interacts with SRF.

The protein localises to the nucleus. Poor transcriptional factor which uses the canonical single or multiple CArG boxes DNA sequence. Acts as a cofactor of serum response factor (SRF) with the potential to modulate SRF target genes. The protein is Myocardin-related transcription factor B (mrtfb) of Xenopus laevis (African clawed frog).